Reading from the N-terminus, the 341-residue chain is Guanine nucleotide-binding protein subunit beta (341 aa).

WD repeat units lie at residues Gly-54–Ala-93, Leu-96–Arg-135, Gly-142–Ala-180, Gly-183–Thr-222, Gly-225–Met-264, Asn-269–Val-308, and Gly-311–Asn-341.

It belongs to the WD repeat G protein beta family. G proteins are composed of 3 units, alpha, beta and gamma. The G protein beta1-gamma2 dimer interacts with calmodulin. As to expression, abundantly expressed in gills, gonad and mantle and at lower levels in digestion gland. Not detected in muscle.

The protein resides in the cytoplasm. Its function is as follows. Guanine nucleotide-binding proteins (G proteins) are involved as a modulator or transducer in various transmembrane signaling systems. The beta and gamma chains are required for the GTPase activity, for replacement of GDP by GTP, and for G protein-effector interaction. The polypeptide is Guanine nucleotide-binding protein subunit beta (Pinctada fucata (Akoya pearl oyster)).